The sequence spans 209 residues: Ribosomal RNA large subunit methyltransferase E (209 aa).

S-adenosyl-L-methionine-binding residues include G63, W65, D83, D99, and D124. The Proton acceptor role is filled by K164.

The protein belongs to the class I-like SAM-binding methyltransferase superfamily. RNA methyltransferase RlmE family.

Its subcellular location is the cytoplasm. It carries out the reaction uridine(2552) in 23S rRNA + S-adenosyl-L-methionine = 2'-O-methyluridine(2552) in 23S rRNA + S-adenosyl-L-homocysteine + H(+). Its function is as follows. Specifically methylates the uridine in position 2552 of 23S rRNA at the 2'-O position of the ribose in the fully assembled 50S ribosomal subunit. The protein is Ribosomal RNA large subunit methyltransferase E of Yersinia enterocolitica serotype O:8 / biotype 1B (strain NCTC 13174 / 8081).